The sequence spans 200 residues: Small heat shock protein hspG2 (200 aa).

The sHSP domain occupies 33–200 (NKRIDIIPSM…DNFQIKLKSI (168 aa)). The tract at residues 86–139 (KLQQQQQQQSEKSSQSTNNKDDDEPSIEEYEDDTKLKSNLNKNTENKDENKTTS) is disordered. Low complexity predominate over residues 88–101 (QQQQQQQSEKSSQS). The span at 106–117 (DDDEPSIEEYED) shows a compositional bias: acidic residues.

This sequence belongs to the small heat shock protein (HSP20) family.

The chain is Small heat shock protein hspG2 (hspG2) from Dictyostelium discoideum (Social amoeba).